We begin with the raw amino-acid sequence, 63 residues long: Adipokinetic prohormone type 1 (63 aa).

Positions 1-22 (MVQRCALVVLLVVAVAAALCSA) are cleaved as a signal peptide. Position 23 is a pyrrolidone carboxylic acid (Gln-23). Thr-32 bears the Threonine amide mark.

It belongs to the AKH/HRTH/RPCH family.

The protein resides in the secreted. Functionally, this hormone, released from cells in the corpora cardiaca, causes release of diglycerides from the fat body and stimulation of muscles to use these diglycerides as an energy source during energy-demanding processes. In Locusta migratoria (Migratory locust), this protein is Adipokinetic prohormone type 1.